We begin with the raw amino-acid sequence, 491 residues long: Serine/threonine-protein kinase 3/4 (491 aa).

Residues 1–24 (MEEVQRRQHPHPRRSLKKLSEDSL) are disordered. Over residues 7–17 (RQHPHPRRSLK) the composition is skewed to basic residues. The region spanning 32–283 (FDVLEKLGEG…ATQLLQHPFI (252 aa)) is the Protein kinase domain. Residues 38-46 (LGEGSYGSV) and Lys61 contribute to the ATP site. The Proton acceptor role is filled by Asp151. Residue Thr185 is modified to Phosphothreonine; by autocatalysis. Residues 292 to 334 (LRDLITDMMEIKLKRQEEQQRDLDQDDEENSEEDDMDSGTMVR) adopt a coiled-coil conformation. Disordered regions lie at residues 307–394 (QEEQ…IQQS) and 406–435 (EKEN…PQDG). Residues 315 to 328 (DQDDEENSEEDDMD) show a composition bias toward acidic residues. Composition is skewed to polar residues over residues 363 to 373 (TLDSQMGTMVI) and 410 to 428 (QANS…SSDN). Positions 437-484 (FESLKSWSVEELQRRLASLDPTMEQEIEEIRQRYQAKRQPILDAIDAK) constitute an SARAH domain. Residues 442–475 (SWSVEELQRRLASLDPTMEQEIEEIRQRYQAKRQ) are a coiled coil.

Belongs to the protein kinase superfamily. STE Ser/Thr protein kinase family. STE20 subfamily. In terms of assembly, homodimer; mediated via the coiled-coil region. The cofactor is Mg(2+). In terms of processing, proteolytically cleaved by caspase-3 during apoptosis at Asp-328 resulting in a 37 kDa form. Proteolytic cleavage results in kinase activation and nuclear translocation of the truncated form (MST1/N).

It is found in the cytoplasm. The protein resides in the nucleus. It catalyses the reaction L-seryl-[protein] + ATP = O-phospho-L-seryl-[protein] + ADP + H(+). The catalysed reaction is L-threonyl-[protein] + ATP = O-phospho-L-threonyl-[protein] + ADP + H(+). Its activity is regulated as follows. Inhibited by the C-terminal non-catalytic region. Activated by caspase-cleavage. Full activation also requires homodimerization and autophosphorylation of Thr-185. Its function is as follows. Stress-activated, pro-apoptotic kinase which, following caspase-cleavage, enters the nucleus and induces chromatin condensation followed by internucleosomal DNA fragmentation. Key component of the Hippo signaling pathway which plays a pivotal role in organ size control and tumor suppression by restricting proliferation and promoting apoptosis. The core of this pathway is composed of a kinase cascade wherein stk3/mst2 and stk4/mst1, in complex with its regulatory protein sav1, phosphorylates and activates lats1/2 in complex with its regulatory protein mob1, which in turn phosphorylates and inactivates yap1 oncoprotein and wwtr1/taz. Phosphorylation of yap1 by lats2 inhibits its translocation into the nucleus to regulate cellular genes important for cell proliferation, cell death, and cell migration. Phosphorylates 'Ser-14' of histone H2B (H2BS14ph) during apoptosis. The protein is Serine/threonine-protein kinase 3/4 (STK4) of Squalus acanthias (Spiny dogfish).